We begin with the raw amino-acid sequence, 87 residues long: Acylphosphatase (87 aa).

One can recognise an Acylphosphatase-like domain in the interval 1 to 87; that stretch reads MAWVHGRVQG…EDYQDFRIRY (87 aa). Active-site residues include R14 and N32.

The protein belongs to the acylphosphatase family.

It catalyses the reaction an acyl phosphate + H2O = a carboxylate + phosphate + H(+). The protein is Acylphosphatase (acyP) of Cronobacter sakazakii (strain ATCC BAA-894) (Enterobacter sakazakii).